The sequence spans 281 residues: Insecticidal crystal toxin protein (281 aa).

9 antigenic epitope regions span residues 54 to 78, 91 to 104, 108 to 116, 131 to 148, 160 to 172, 189 to 196, 208 to 216, 221 to 236, and 247 to 256; these read NYSH…VYTF, IYTH…AVKA, GTASKVVQG, FKIT…FIRI, AVIN…VAEL, KYKDFQYL, QNISLVFNR, TNTT…LPIT, and KLETVQQIIN.

The protein belongs to the delta endotoxin family.

Its function is as follows. Promotes colloidosmotic lysis by binding to the midgut epithelial cells of insects. Active against Mamestra brassicae. The sequence is that of Insecticidal crystal toxin protein from Bacillus thuringiensis subsp. kurstaki.